The chain runs to 54 residues: Large ribosomal subunit protein bL33 (54 aa).

This sequence belongs to the bacterial ribosomal protein bL33 family.

In Parafrankia sp. (strain EAN1pec), this protein is Large ribosomal subunit protein bL33.